The sequence spans 65 residues: Beta-toxin Tf4a (65 aa).

Residues K2–G63 enclose the LCN-type CS-alpha/beta domain. 4 disulfide bridges follow: C12-C62, C16-C38, C24-C43, and C28-C45. C62 carries the post-translational modification Cysteine amide.

Belongs to the long (4 C-C) scorpion toxin superfamily. Sodium channel inhibitor family. Alpha subfamily. In terms of tissue distribution, expressed by the venom gland.

Its subcellular location is the secreted. In terms of biological role, alpha toxins bind voltage-independently at site-3 of sodium channels (Nav) and inhibit the inactivation of the activated channels, thereby blocking neuronal transmission. This toxin is toxic to frogs but non-toxic to insect larvae (T.molitor), mammals (rats) and crustaceans (crabs) at the doses assayed. In Tityus fasciolatus (Central Brazilian scorpion), this protein is Beta-toxin Tf4a.